Reading from the N-terminus, the 421-residue chain is Serine hydroxymethyltransferase (421 aa).

Residues leucine 121 and 125-127 (GHL) contribute to the (6S)-5,6,7,8-tetrahydrofolate site. Lysine 230 is modified (N6-(pyridoxal phosphate)lysine). Residues glutamate 246 and 354 to 356 (SPF) contribute to the (6S)-5,6,7,8-tetrahydrofolate site.

Belongs to the SHMT family. As to quaternary structure, homodimer. The cofactor is pyridoxal 5'-phosphate.

The protein localises to the cytoplasm. It catalyses the reaction (6R)-5,10-methylene-5,6,7,8-tetrahydrofolate + glycine + H2O = (6S)-5,6,7,8-tetrahydrofolate + L-serine. The protein operates within one-carbon metabolism; tetrahydrofolate interconversion. It functions in the pathway amino-acid biosynthesis; glycine biosynthesis; glycine from L-serine: step 1/1. Functionally, catalyzes the reversible interconversion of serine and glycine with tetrahydrofolate (THF) serving as the one-carbon carrier. This reaction serves as the major source of one-carbon groups required for the biosynthesis of purines, thymidylate, methionine, and other important biomolecules. Also exhibits THF-independent aldolase activity toward beta-hydroxyamino acids, producing glycine and aldehydes, via a retro-aldol mechanism. The protein is Serine hydroxymethyltransferase of Rickettsia felis (strain ATCC VR-1525 / URRWXCal2) (Rickettsia azadi).